The primary structure comprises 37 residues: Large ribosomal subunit protein bL36 (37 aa).

This sequence belongs to the bacterial ribosomal protein bL36 family.

This chain is Large ribosomal subunit protein bL36, found in Leptospira biflexa serovar Patoc (strain Patoc 1 / Ames).